The sequence spans 441 residues: Xaa-Pro dipeptidase (441 aa).

Mn(2+) contacts are provided by Asp244, Asp255, His336, Glu381, and Glu420.

Belongs to the peptidase M24B family. Bacterial-type prolidase subfamily. Mn(2+) is required as a cofactor.

The enzyme catalyses Xaa-L-Pro dipeptide + H2O = an L-alpha-amino acid + L-proline. In terms of biological role, splits dipeptides with a prolyl residue in the C-terminal position. The polypeptide is Xaa-Pro dipeptidase (Xanthomonas oryzae pv. oryzae (strain MAFF 311018)).